Reading from the N-terminus, the 375-residue chain is Alcohol dehydrogenase 1 (375 aa).

Position 2 is an N-acetylserine (S2). Zn(2+) is bound by residues C47, H68, C98, C101, C104, C112, and C175. NAD(+)-binding positions include 200–205, D224, K229, 293–295, and R370; these read GLGGVG and LGV.

Belongs to the zinc-containing alcohol dehydrogenase family. Class-I subfamily. In terms of assembly, homodimer. Zn(2+) is required as a cofactor.

It localises to the cytoplasm. The enzyme catalyses a primary alcohol + NAD(+) = an aldehyde + NADH + H(+). It carries out the reaction a secondary alcohol + NAD(+) = a ketone + NADH + H(+). The protein is Alcohol dehydrogenase 1 (ADH1) of Apteryx australis (Southern brown kiwi).